The chain runs to 130 residues: Small ribosomal subunit protein uS9 (130 aa).

It belongs to the universal ribosomal protein uS9 family.

This is Small ribosomal subunit protein uS9 from Variovorax paradoxus (strain S110).